The following is a 1337-amino-acid chain: GTPase activating protein homolog 3 (1337 aa).

Residues 14–264 (PESFADLWDG…LINSINNEDE (251 aa)) enclose the F-BAR domain. Disordered stretches follow at residues 279–328 (PKPF…LPIF) and 345–392 (ITNS…RFST). Over residues 293-302 (TPPPPPPPQI) the composition is skewed to pro residues. The span at 345–358 (ITNSLSLSSDSLQT) shows a compositional bias: polar residues. The 190-residue stretch at 422-611 (CKIEDIMVAQ…NIIEHFKPLQ (190 aa)) folds into the Rho-GAP domain. Disordered stretches follow at residues 612-689 (VNDS…TTNT), 733-781 (VNNN…HTVA), and 794-821 (ITTPQKSIGDGNGLIGQSPSAHLMSPSE). Low complexity-rich tracts occupy residues 621–637 (SSSSSSSTSINQSSIES), 645–687 (SSTN…SSTT), and 734–772 (NNNNQNQNQNQNQNQNQDQNQNQSKQPIQSSNQTQQQVS). A coiled-coil region spans residues 830 to 859 (YLEDQERCKQRIDELHTQVNELYSDITTIE). Disordered stretches follow at residues 1041–1102 (SDPD…INNS) and 1114–1166 (KSAL…AHAI). Residues 1047–1063 (SPPTISNTTNRLLNTSG) show a composition bias toward polar residues. Low complexity-rich tracts occupy residues 1064-1102 (STDFSTTPLSSSPSTSSTSLSTNNNNNNNGNRNLDINNS) and 1114-1159 (KSAL…TTTN). Positions 1189–1219 (LEINNKLHSQLTEELKKKQQQYKQLIFDIID) form a coiled coil.

The protein localises to the cytoplasm. The protein resides in the contractile vacuole. Functionally, rho GTPase-activating protein involved in the signal transduction pathway. This is GTPase activating protein homolog 3 (mgp3) from Dictyostelium discoideum (Social amoeba).